Here is a 134-residue protein sequence, read N- to C-terminus: Small ribosomal subunit protein uS8c (134 aa).

Component of the chloroplast small ribosomal subunit (SSU). Mature 70S chloroplast ribosomes of higher plants consist of a small (30S) and a large (50S) subunit. The 30S small subunit contains 1 molecule of ribosomal RNA (16S rRNA) and 24 different proteins. The 50S large subunit contains 3 rRNA molecules (23S, 5S and 4.5S rRNA) and 33 different proteins.

Its subcellular location is the plastid. The protein resides in the chloroplast. Functionally, component of the chloroplast ribosome (chloro-ribosome), a dedicated translation machinery responsible for the synthesis of chloroplast genome-encoded proteins, including proteins of the transcription and translation machinery and components of the photosynthetic apparatus. The chain is Small ribosomal subunit protein uS8c (rps8) from Spinacia oleracea (Spinach).